We begin with the raw amino-acid sequence, 350 residues long: Heat-inducible transcription repressor HrcA (350 aa).

It belongs to the HrcA family.

Functionally, negative regulator of class I heat shock genes (grpE-dnaK-dnaJ and groELS operons). Prevents heat-shock induction of these operons. The sequence is that of Heat-inducible transcription repressor HrcA from Methylococcus capsulatus (strain ATCC 33009 / NCIMB 11132 / Bath).